We begin with the raw amino-acid sequence, 265 residues long: Ribosomal RNA small subunit methyltransferase A (265 aa).

S-adenosyl-L-methionine is bound by residues H13, L15, G40, E62, D87, and N106.

Belongs to the class I-like SAM-binding methyltransferase superfamily. rRNA adenine N(6)-methyltransferase family. RsmA subfamily.

It localises to the cytoplasm. The enzyme catalyses adenosine(1518)/adenosine(1519) in 16S rRNA + 4 S-adenosyl-L-methionine = N(6)-dimethyladenosine(1518)/N(6)-dimethyladenosine(1519) in 16S rRNA + 4 S-adenosyl-L-homocysteine + 4 H(+). Its function is as follows. Specifically dimethylates two adjacent adenosines (A1518 and A1519) in the loop of a conserved hairpin near the 3'-end of 16S rRNA in the 30S particle. May play a critical role in biogenesis of 30S subunits. This is Ribosomal RNA small subunit methyltransferase A from Persephonella marina (strain DSM 14350 / EX-H1).